An 84-amino-acid polypeptide reads, in one-letter code: Small ribosomal subunit protein uS17 (84 aa).

It belongs to the universal ribosomal protein uS17 family. As to quaternary structure, part of the 30S ribosomal subunit.

In terms of biological role, one of the primary rRNA binding proteins, it binds specifically to the 5'-end of 16S ribosomal RNA. The chain is Small ribosomal subunit protein uS17 from Pectobacterium atrosepticum (strain SCRI 1043 / ATCC BAA-672) (Erwinia carotovora subsp. atroseptica).